The primary structure comprises 622 residues: Low affinity potassium transport system protein Kup (622 aa).

12 helical membrane-spanning segments follow: residues 9 to 29, 49 to 69, 103 to 123, 137 to 157, 165 to 185, 213 to 233, 247 to 267, 276 to 296, 337 to 357, 363 to 383, 396 to 416, and 419 to 439; these read LPAI…TSPL, VFGF…IKYL, VIMG…TPAI, PQLD…LFMI, VGKL…GLGL, VSFI…VLYA, WFTV…ALLL, PFFL…AALA, IYIP…IVSF, LAAA…ILST, FVAL…TANL, and LLSG…VMTT.

The protein belongs to the HAK/KUP transporter (TC 2.A.72) family.

The protein localises to the cell inner membrane. The catalysed reaction is K(+)(in) + H(+)(in) = K(+)(out) + H(+)(out). Functionally, responsible for the low-affinity transport of potassium into the cell. Likely operates as a K(+):H(+) symporter. This is Low affinity potassium transport system protein Kup from Shigella flexneri.